The sequence spans 213 residues: Uridine kinase (213 aa).

12 to 19 (GGSCSGKT) provides a ligand contact to ATP.

The protein belongs to the uridine kinase family.

It localises to the cytoplasm. The catalysed reaction is uridine + ATP = UMP + ADP + H(+). It catalyses the reaction cytidine + ATP = CMP + ADP + H(+). It participates in pyrimidine metabolism; CTP biosynthesis via salvage pathway; CTP from cytidine: step 1/3. The protein operates within pyrimidine metabolism; UMP biosynthesis via salvage pathway; UMP from uridine: step 1/1. The chain is Uridine kinase (udk) from Mycoplasma genitalium (strain ATCC 33530 / DSM 19775 / NCTC 10195 / G37) (Mycoplasmoides genitalium).